Here is a 577-residue protein sequence, read N- to C-terminus: F-box/TPR repeat protein pof3 (577 aa).

TPR repeat units follow at residues 6–39, 41–74, and 76–108; these read VKAI…EPNP, IDLF…NARN, and RGYL…VHKM. The F-box domain maps to 138–180; that stretch reads ILPREVLLCILQQLNFKSIVQCMQVCKHWRDCIKKEPSLFCCL.

As to quaternary structure, a part of the E3 ubiquitin ligase Skp1-Cullin-1-F-box (SCF) complex. Interacts with cul1, mcl1 and skp1.

It localises to the mitochondrion. The protein resides in the nucleus. In terms of biological role, has a role in substrate recognition in the Skp1-Cullin-1/Cdc53-F-box (SCF) ubiquitin ligase complex. Required for the maintenance of telomere length and transcriptional silencing at the telomere. Also required for chromosome segregation. The polypeptide is F-box/TPR repeat protein pof3 (pof3) (Schizosaccharomyces pombe (strain 972 / ATCC 24843) (Fission yeast)).